A 415-amino-acid polypeptide reads, in one-letter code: Adenylosuccinate synthetase (415 aa).

GTP is bound by residues 12–18 (GDEGKGK) and 40–42 (GHT). Catalysis depends on Asp-13, which acts as the Proton acceptor. Mg(2+) contacts are provided by Asp-13 and Gly-40. IMP contacts are provided by residues 13-16 (DEGK), 38-41 (NAGH), Thr-125, Arg-139, Gln-219, Thr-234, and Arg-298. His-41 functions as the Proton donor in the catalytic mechanism. 294 to 300 (TTTGRPR) is a substrate binding site. GTP is bound by residues Arg-300, 326-328 (KLD), and 404-406 (STG).

The protein belongs to the adenylosuccinate synthetase family. In terms of assembly, homodimer. Mg(2+) serves as cofactor.

The protein localises to the cytoplasm. It carries out the reaction IMP + L-aspartate + GTP = N(6)-(1,2-dicarboxyethyl)-AMP + GDP + phosphate + 2 H(+). The protein operates within purine metabolism; AMP biosynthesis via de novo pathway; AMP from IMP: step 1/2. Plays an important role in the de novo pathway of purine nucleotide biosynthesis. Catalyzes the first committed step in the biosynthesis of AMP from IMP. In Wolinella succinogenes (strain ATCC 29543 / DSM 1740 / CCUG 13145 / JCM 31913 / LMG 7466 / NCTC 11488 / FDC 602W) (Vibrio succinogenes), this protein is Adenylosuccinate synthetase.